The following is a 275-amino-acid chain: MLLSRFTSVFPRNVIVRGVSTLTSHVDRNYLVRSSFDKCQRFPFSDSKQEAEDVKKKCEEAAAKKKCAEAAKKEKEAAEKKKCAEAAKKEKEAAEKKKCAEAAKKEQEAAQKKKCAELAKKEKEAAEKKKCAEAAKKEKEAAERKKCEEAAFKQKCEEAAKKKKEAKKAAELQQKCAALAKKEKEAEMMKKCEEAAKKKAAEEAAKKKAEEVAAKKKADEAAAKKKCAEAKKKAEEAALKKMCEEAALKKMCEEAALQKKCAEAAKNAKKTDSET.

12 repeat units span residues 64–79 (KKKC…EAAE), 80–95 (KKKC…EAAE), 96–111 (KKKC…EAAQ), 112–127 (KKKC…EAAE), 128–143 (KKKC…EAAE), 144–159 (RKKC…CEEA), 160–175 (AKKK…LQQK), 181–196 (KKEK…EEAA), 197–212 (KKKA…AEEV), 215–230 (KKKA…CAEA), 231–246 (KKKA…CEEA), and 249–264 (KKMC…CAEA). The segment at 64-264 (KKKCAEAAKK…AALQKKCAEA (201 aa)) is 12 X 16 AA tandem repeats of [KRA]-K-[KEM]-[CKA]-[AEKD]-[EA]-[ALE]-[AMK]-[FKAML]-[KQA]-[EQKA]-[KQCEM]-[ECLA]-[AEQ]-[AEQ]-[EQAKV].

In terms of tissue distribution, testis.

It is found in the cytoplasm. Functionally, possible structural role in the sperm tail. The chain is Axoneme-associated protein mst101(3) (mst101(3)) from Drosophila hydei (Fruit fly).